The following is a 506-amino-acid chain: Zinc finger and SCAN domain containing protein 4D (506 aa).

The region spanning 37 to 119 (SAQLNFSPSN…RFMESLTDEC (83 aa)) is the SCAN box domain. Residues 238–264 (SQGNSSHHVDFRSAPTPADVPMEEQPK) form a disordered region. 4 C2H2-type zinc fingers span residues 395 to 417 (FKCE…QRTH), 424 to 446 (LLCV…EIIH), 452 to 474 (FKCS…EMIH), and 480 to 503 (YVCS…RNYH).

As to expression, highly expressed at the 2-cell stage but its expression is rapidly turned off.

The protein localises to the nucleus. It localises to the chromosome. It is found in the telomere. Transcription factor required to regulate early development. Binds telomeres and plays a key role in genomic stability by regulating telomere elongation. Acts as an activator of spontaneous telomere sister chromatid exchange (T-SCE) and telomere elongation. The sequence is that of Zinc finger and SCAN domain containing protein 4D (Zscan4d) from Mus musculus (Mouse).